Consider the following 316-residue polypeptide: MPMQGAQRKLLGSLNSTPTATSNLGLAANHTGAPCLEVSIPDGLFLSLGLVSLVENMLVVAAIAKNRNLHSPMYCFICCLALSDLLVSGSNMLETAVVVLLEAGALATRASVVQQLHNTIDVLTYSSMLCSLCFVGAIAVDRYISIFYALRYHSIMTLPRVQRVIAAIWVASVTSSTLFITYYEHVVALLCLVVFLTMLVLMAVLYVHMLARACQHAQGITRLHKRQPPAHQGFGLRGAATLTILLGIFFLCWGPFFLHLTLVVFCPQHLTCSCIFKNFKVFLTLIICNTIIDPLIYAFRSQELCRTLKEVLLCSW.

Residues 1 to 37 lie on the Extracellular side of the membrane; it reads MPMQGAQRKLLGSLNSTPTATSNLGLAANHTGAPCLE. Asn29 carries N-linked (GlcNAc...) asparagine glycosylation. A helical transmembrane segment spans residues 38–63; that stretch reads VSIPDGLFLSLGLVSLVENMLVVAAI. The Cytoplasmic portion of the chain corresponds to 64–72; the sequence is AKNRNLHSP. The chain crosses the membrane as a helical span at residues 73–93; the sequence is MYCFICCLALSDLLVSGSNML. Over 94 to 118 the chain is Extracellular; that stretch reads ETAVVVLLEAGALATRASVVQQLHN. A helical membrane pass occupies residues 119–140; the sequence is TIDVLTYSSMLCSLCFVGAIAV. The Cytoplasmic segment spans residues 141 to 163; it reads DRYISIFYALRYHSIMTLPRVQR. The chain crosses the membrane as a helical span at residues 164 to 183; the sequence is VIAAIWVASVTSSTLFITYY. The Extracellular segment spans residues 184 to 191; sequence EHVVALLC. A helical transmembrane segment spans residues 192–210; the sequence is LVVFLTMLVLMAVLYVHML. Residues 211 to 239 are Cytoplasmic-facing; it reads ARACQHAQGITRLHKRQPPAHQGFGLRGA. A helical transmembrane segment spans residues 240 to 265; sequence ATLTILLGIFFLCWGPFFLHLTLVVF. Residues 266 to 278 lie on the Extracellular side of the membrane; sequence CPQHLTCSCIFKN. The chain crosses the membrane as a helical span at residues 279 to 299; sequence FKVFLTLIICNTIIDPLIYAF. The Cytoplasmic portion of the chain corresponds to 300 to 316; it reads RSQELCRTLKEVLLCSW. Residue Cys314 is the site of S-palmitoyl cysteine attachment.

The protein belongs to the G-protein coupled receptor 1 family. Interacts with MGRN1, but does not undergo MGRN1-mediated ubiquitination; this interaction competes with GNAS-binding and thus inhibits agonist-induced cAMP production. Interacts with OPN3; the interaction results in a decrease in MC1R-mediated cAMP signaling and ultimately a decrease in melanin production in melanocytes.

It localises to the cell membrane. Its function is as follows. Receptor for MSH (alpha, beta and gamma) and ACTH. The activity of this receptor is mediated by G proteins which activate adenylate cyclase. Mediates melanogenesis, the production of eumelanin (black/brown) and phaeomelanin (red/yellow), via regulation of cAMP signaling in melanocytes. The sequence is that of Melanocyte-stimulating hormone receptor (MC1R) from Cebus albifrons (White-fronted capuchin).